The primary structure comprises 220 residues: Iron-sulfur cluster repair protein YtfE (220 aa).

It belongs to the RIC family. YtfE subfamily. As to quaternary structure, homodimer.

The protein localises to the cytoplasm. Di-iron-containing protein involved in the repair of iron-sulfur clusters damaged by oxidative and nitrosative stress conditions. This is Iron-sulfur cluster repair protein YtfE from Escherichia coli O8 (strain IAI1).